The sequence spans 141 residues: Large ribosomal subunit protein uL11 (141 aa).

The protein belongs to the universal ribosomal protein uL11 family. Part of the ribosomal stalk of the 50S ribosomal subunit. Interacts with L10 and the large rRNA to form the base of the stalk. L10 forms an elongated spine to which L12 dimers bind in a sequential fashion forming a multimeric L10(L12)X complex. Post-translationally, one or more lysine residues are methylated.

Its function is as follows. Forms part of the ribosomal stalk which helps the ribosome interact with GTP-bound translation factors. This Clostridioides difficile (strain 630) (Peptoclostridium difficile) protein is Large ribosomal subunit protein uL11.